The following is a 367-amino-acid chain: 3-isopropylmalate dehydrogenase (367 aa).

77–90 (GPKYDDLDFSVKPE) is an NAD(+) binding site. Residues R97, R107, R135, and D224 each coordinate substrate. D224, D248, and D252 together coordinate Mg(2+). 287–299 (GSAPDIAGQGKAN) provides a ligand contact to NAD(+).

This sequence belongs to the isocitrate and isopropylmalate dehydrogenases family. LeuB type 1 subfamily. In terms of assembly, homodimer. Mg(2+) serves as cofactor. Requires Mn(2+) as cofactor.

It is found in the cytoplasm. The catalysed reaction is (2R,3S)-3-isopropylmalate + NAD(+) = 4-methyl-2-oxopentanoate + CO2 + NADH. The protein operates within amino-acid biosynthesis; L-leucine biosynthesis; L-leucine from 3-methyl-2-oxobutanoate: step 3/4. In terms of biological role, catalyzes the oxidation of 3-carboxy-2-hydroxy-4-methylpentanoate (3-isopropylmalate) to 3-carboxy-4-methyl-2-oxopentanoate. The product decarboxylates to 4-methyl-2 oxopentanoate. This Ruegeria pomeroyi (strain ATCC 700808 / DSM 15171 / DSS-3) (Silicibacter pomeroyi) protein is 3-isopropylmalate dehydrogenase.